We begin with the raw amino-acid sequence, 429 residues long: Serum response factor-binding protein 1 (429 aa).

Position 2 is an N-acetylalanine (alanine 2). 2 coiled-coil regions span residues 42 to 67 and 108 to 144; these read KGTE…AMKE and LLKK…EDNH. 2 stretches are compositionally biased toward polar residues: residues 128–138 and 146–160; these read QNVTEVESSKN and KNTL…NLQR. 2 disordered regions span residues 128–285 and 311–429; these read QNVT…GDDF and EKVF…TFDD. Basic and acidic residues predominate over residues 183–195; that stretch reads NSKEKIAKMEHGP. Lysine 190 is covalently cross-linked (Glycyl lysine isopeptide (Lys-Gly) (interchain with G-Cter in SUMO2)). Phosphoserine is present on residues serine 203, serine 205, serine 264, serine 279, and serine 281. A compositionally biased stretch (acidic residues) spans 249-265; it reads GGEELCEEEKEYFDDST. Residues 311 to 341 are compositionally biased toward basic and acidic residues; that stretch reads EKVFLKEDTGETHGDTRNDKTKPSTETRKLE. Lysine 316 participates in a covalent cross-link: Glycyl lysine isopeptide (Lys-Gly) (interchain with G-Cter in SUMO2). Phosphoserine is present on residues serine 349, serine 351, and serine 367. Positions 357–367 are enriched in basic and acidic residues; the sequence is NFKEQAPKTRS. The segment covering 373-383 has biased composition (polar residues); the sequence is NEPQFKNQFNK.

As to quaternary structure, interacts with SRF. Forms complexes with SRF and SRF cofactors ARID2, MYOCD and NKX2-5. Interacts with the N-terminus of SLC2A4.

It is found in the cytoplasm. It localises to the perinuclear region. May be involved in regulating transcriptional activation of cardiac genes during the aging process. May play a role in biosynthesis and/or processing of SLC2A4 in adipose cells. This is Serum response factor-binding protein 1 from Pongo abelii (Sumatran orangutan).